Consider the following 102-residue polypeptide: MAKEKIRIRLKAYDHRILDQSAEKIVETAKRSGATVSGPIPLPTEKTIYTILRAVHKYKDSREQFEMRTHKRLIDIVSPTPQTVDSLMRLDLPSGVDIEIKL.

This sequence belongs to the universal ribosomal protein uS10 family. Part of the 30S ribosomal subunit.

In terms of biological role, involved in the binding of tRNA to the ribosomes. The protein is Small ribosomal subunit protein uS10 of Bacillus cereus (strain G9842).